A 389-amino-acid polypeptide reads, in one-letter code: Phospho-N-acetylmuramoyl-pentapeptide-transferase (389 aa).

10 helical membrane-spanning segments follow: residues 21–41 (FITF…LVTG), 70–90 (GTPT…TLLW), 97–117 (FIWV…VDDY), 134–154 (YMWQ…SVSA), 189–209 (TISY…VIVG), 222–242 (GLAI…AYLT), 259–279 (AGEL…FLWF), 286–306 (VFMG…IAVI), 311–331 (VVLF…MLQV), and 366–386 (QVVV…LSTL).

The protein belongs to the glycosyltransferase 4 family. MraY subfamily. Requires Mg(2+) as cofactor.

It localises to the cell inner membrane. The catalysed reaction is UDP-N-acetyl-alpha-D-muramoyl-L-alanyl-gamma-D-glutamyl-meso-2,6-diaminopimeloyl-D-alanyl-D-alanine + di-trans,octa-cis-undecaprenyl phosphate = di-trans,octa-cis-undecaprenyl diphospho-N-acetyl-alpha-D-muramoyl-L-alanyl-D-glutamyl-meso-2,6-diaminopimeloyl-D-alanyl-D-alanine + UMP. The protein operates within cell wall biogenesis; peptidoglycan biosynthesis. Catalyzes the initial step of the lipid cycle reactions in the biosynthesis of the cell wall peptidoglycan: transfers peptidoglycan precursor phospho-MurNAc-pentapeptide from UDP-MurNAc-pentapeptide onto the lipid carrier undecaprenyl phosphate, yielding undecaprenyl-pyrophosphoryl-MurNAc-pentapeptide, known as lipid I. This Janthinobacterium sp. (strain Marseille) (Minibacterium massiliensis) protein is Phospho-N-acetylmuramoyl-pentapeptide-transferase.